Consider the following 343-residue polypeptide: ATP phosphoribosyltransferase regulatory subunit (343 aa).

The interval 324 to 343 is disordered; that stretch reads RANGRAKRPARPRRSPPRPR. The segment covering 327–343 has biased composition (basic residues); it reads GRAKRPARPRRSPPRPR.

This sequence belongs to the class-II aminoacyl-tRNA synthetase family. HisZ subfamily. Heteromultimer composed of HisG and HisZ subunits.

The protein localises to the cytoplasm. It participates in amino-acid biosynthesis; L-histidine biosynthesis; L-histidine from 5-phospho-alpha-D-ribose 1-diphosphate: step 1/9. Its function is as follows. Required for the first step of histidine biosynthesis. May allow the feedback regulation of ATP phosphoribosyltransferase activity by histidine. This chain is ATP phosphoribosyltransferase regulatory subunit, found in Anaeromyxobacter sp. (strain Fw109-5).